The chain runs to 194 residues: Thymidine kinase (194 aa).

ATP is bound by residues 15 to 22 (GSMFSGKS) and 88 to 91 (DEVQ). The Proton acceptor role is filled by glutamate 89. Zn(2+) is bound by residues cysteine 145, cysteine 148, cysteine 183, and cysteine 186.

This sequence belongs to the thymidine kinase family. In terms of assembly, homotetramer.

It localises to the cytoplasm. The catalysed reaction is thymidine + ATP = dTMP + ADP + H(+). The protein is Thymidine kinase of Bacillus anthracis (strain A0248).